Consider the following 167-residue polypeptide: Low molecular mass early light-inducible protein HV60, chloroplastic (167 aa).

A chloroplast-targeting transit peptide spans 1–33 (MATMMAMSSFAGAAVLPRGSARSLPALGRRTLV). 2 consecutive transmembrane segments (helical) span residues 101–121 (GQAW…VPLL) and 145–165 (FAMI…TPFI).

The protein belongs to the ELIP/psbS family.

It is found in the plastid. Its subcellular location is the chloroplast membrane. Probably involved in the integration of pigments into the mature pigment-protein complexes. In Hordeum vulgare (Barley), this protein is Low molecular mass early light-inducible protein HV60, chloroplastic.